The following is a 151-amino-acid chain: Major curlin subunit (151 aa).

The first 20 residues, 1–20 (MKLLKVAAIAAIVFSGSALA), serve as a signal peptide directing secretion. Residues 71-90 (TQHGGGNGADVGQGSDDSSI) form a disordered region.

It belongs to the CsgA/CsgB family.

The protein localises to the fimbrium. Its function is as follows. Curlin is the structural subunit of the curli fimbriae. Curli are coiled surface structures that assemble preferentially at growth temperatures below 37 degrees Celsius. Curli can bind to fibronectin. The protein is Major curlin subunit (csgA) of Escherichia coli (strain K12).